The sequence spans 930 residues: Translation initiation factor IF-2 (930 aa).

The tract at residues 27 to 342 (LGLDVKSHSS…APKPVTERKF (316 aa)) is disordered. Low complexity predominate over residues 52–103 (KAAAPQAPAEKPVAAQPSPQKTPAKEAAPVKAEPTEAKAAAQPEAKTETAAP). Composition is skewed to basic and acidic residues over residues 112–128 (FKAE…ERRK) and 136–178 (QNKE…DGRR). Residues 183 to 195 (HQGFNGQKRQQPQ) are compositionally biased toward polar residues. Basic and acidic residues predominate over residues 218–245 (RSSEERFKQAQEAKEVMERQNRRKEQPK). A compositionally biased stretch (pro residues) spans 251 to 268 (PVQPAPAPSAPAANPSPA). A compositionally biased stretch (basic and acidic residues) spans 280 to 297 (ARPDKKRDDFDREEEGPR). The segment covering 302–318 (NRSSQNQVRNQRNSNWN) has biased composition (low complexity). The 168-residue stretch at 432–599 (ERPPVVTIMG…TVLLVAEIQE (168 aa)) folds into the tr-type G domain. Positions 441–448 (GHVDHGKT) are G1. 441-448 (GHVDHGKT) contributes to the GTP binding site. A G2 region spans residues 466–470 (GITQH). Residues 487–490 (DTPG) form a G3 region. Residues 487–491 (DTPGH) and 541–544 (NKID) each bind GTP. Positions 541–544 (NKID) are G4. Positions 577 to 579 (SAK) are G5.

Belongs to the TRAFAC class translation factor GTPase superfamily. Classic translation factor GTPase family. IF-2 subfamily.

It localises to the cytoplasm. In terms of biological role, one of the essential components for the initiation of protein synthesis. Protects formylmethionyl-tRNA from spontaneous hydrolysis and promotes its binding to the 30S ribosomal subunits. Also involved in the hydrolysis of GTP during the formation of the 70S ribosomal complex. This Streptococcus sanguinis (strain SK36) protein is Translation initiation factor IF-2.